Consider the following 315-residue polypeptide: D-alanine--D-alanine ligase B (315 aa).

The ATP-grasp domain maps to 109 to 309 (KKVAAAAGVV…FAELLSWMVE (201 aa)). Position 135–190 (135–190 (PMKPPYVVKPVREGSSFGVVIVKEDQPHPPQVIGSADWKYGDEVMVEGYIAGRELT)) interacts with ATP. Residues Asp259, Glu276, and Asn278 each contribute to the Mg(2+) site.

Belongs to the D-alanine--D-alanine ligase family. The cofactor is Mg(2+). It depends on Mn(2+) as a cofactor.

Its subcellular location is the cytoplasm. The enzyme catalyses 2 D-alanine + ATP = D-alanyl-D-alanine + ADP + phosphate + H(+). It functions in the pathway cell wall biogenesis; peptidoglycan biosynthesis. Its function is as follows. Cell wall formation. In Brucella melitensis biotype 1 (strain ATCC 23456 / CCUG 17765 / NCTC 10094 / 16M), this protein is D-alanine--D-alanine ligase B.